A 545-amino-acid chain; its full sequence is Glucans biosynthesis protein G (545 aa).

Residues 1–34 (MVSLLRCQSFKPSSSLICSLALSAAFALSSSAFA) form the signal peptide. Positions 38–60 (KPAENKPATPVVSPPKATAQPAN) are disordered.

Belongs to the OpgD/OpgG family.

The protein resides in the periplasm. The protein operates within glycan metabolism; osmoregulated periplasmic glucan (OPG) biosynthesis. In terms of biological role, involved in the biosynthesis of osmoregulated periplasmic glucans (OPGs). The chain is Glucans biosynthesis protein G from Shewanella sp. (strain MR-4).